We begin with the raw amino-acid sequence, 810 residues long: Plasminogen (810 aa).

Positions 1–19 are cleaved as a signal peptide; that stretch reads MEHKEVVLLLLLFLKSGQG. Positions 20 to 98 constitute a PAN domain; sequence EPLDDYVNTK…RDVVLFEKKV (79 aa). 12 cysteine pairs are disulfide-bonded: C49–C73, C53–C61, C103–C181, C124–C164, C152–C176, C185–C262, C188–C316, C206–C245, C234–C257, C275–C352, C296–C335, and C324–C347. Kringle domains lie at 103-181, 184-262, and 275-352; these read CKTG…IPEC, ECMH…IPRC, and CLKG…IPSC. Polar residues predominate over residues 125–141; sequence QKWSSTSPHRPTFSPAT. A disordered region spans residues 125-145; it reads QKWSSTSPHRPTFSPATHPSE. 3 residues coordinate L-lysine: T136, D158, and R172. T365 is a glycosylation site (O-linked (GalNAc...) threonine). 9 disulfide bridges follow: C377-C454, C398-C437, C426-C449, C481-C560, C502-C543, C531-C555, C567-C685, C577-C585, and C607-C623. Kringle domains lie at 377–454 and 481–560; these read CYHG…LKKC and CMFG…VPQC. D432 and R445 together coordinate L-lysine. Residues 581–808 enclose the Peptidase S1 domain; it reads VVGGCVAYPH…FVTWIEGVMR (228 aa). A Phosphoserine modification is found at S597. Active-site charge relay system residues include H622 and D665. Position 688 is a phosphoserine (S688). 3 cysteine pairs are disulfide-bonded: C699/C766, C729/C745, and C756/C784. S760 serves as the catalytic Charge relay system.

This sequence belongs to the peptidase S1 family. Plasminogen subfamily. Interacts with CSPG4 and AMOT. Interacts (via the Kringle domains) with HRG; the interaction tethers PLG to the cell surface and enhances its activation. Interacts (via Kringle 4 domain) with ADA; the interaction stimulates PLG activation when in complex with DPP4. Angiostatin: Interacts with ATP5F1A; the interaction inhibits most of the angiogenic effects of angiostatin. In terms of processing, in the presence of the inhibitor, the activation involves only cleavage after Arg-580, yielding two chains held together by two disulfide bonds. In the absence of the inhibitor, the activation involves additionally the removal of the activation peptide.

It is found in the secreted. The enzyme catalyses Preferential cleavage: Lys-|-Xaa &gt; Arg-|-Xaa, higher selectivity than trypsin. Converts fibrin into soluble products.. Its activity is regulated as follows. Converted into plasmin by plasminogen activators, both plasminogen and its activator being bound to fibrin. Activated with catalytic amounts of streptokinase. Functionally, plasmin dissolves the fibrin of blood clots and acts as a proteolytic factor in a variety of other processes including embryonic development, tissue remodeling, tumor invasion, and inflammation. In ovulation, weakens the walls of the Graafian follicle. It activates the urokinase-type plasminogen activator, collagenases and several complement zymogens, such as C1, C4 and C5. Cleavage of fibronectin and laminin leads to cell detachment and apoptosis. Also cleaves fibrin, thrombospondin and von Willebrand factor. Its role in tissue remodeling and tumor invasion may be modulated by CSPG4. Binds to cells. This chain is Plasminogen (PLG), found in Macaca mulatta (Rhesus macaque).